A 609-amino-acid polypeptide reads, in one-letter code: Sporulation-specific protein 21 (609 aa).

3 disordered regions span residues 1 to 50 (MDNI…LENS), 68 to 96 (PASKSSRSIGSMKSNQSLVSMKSSDDGNS), and 124 to 165 (KLDS…SIKG). Polar residues predominate over residues 10-31 (MEGTSTMTVTSRSSEDSSCISN). Residues 32–43 (HEQDTDTHKDGD) are compositionally biased toward basic and acidic residues. A compositionally biased stretch (low complexity) spans 68 to 81 (PASKSSRSIGSMKS). 2 stretches are compositionally biased toward polar residues: residues 82–96 (NQSLVSMKSSDDGNS) and 127–136 (STGSQRSKNN). The span at 143–159 (SSTTSQTTCSSSSSSSS) shows a compositional bias: low complexity. Coiled-coil stretches lie at residues 283–342 (RTKI…DNES), 357–393 (RETLDRVNREQQLIIDQNEFLKKSVNELQNEVNATNF), and 424–483 (ENLT…LLIE). Residues 586–609 (DQKSNQNSSTPYKQSQRQVPHSIK) are disordered. The segment covering 587–609 (QKSNQNSSTPYKQSQRQVPHSIK) has biased composition (polar residues).

The protein belongs to the MPC70 family. As to quaternary structure, interacts directly with MPC54, NUD1 and SPC42. Interacts with ADY3. Interacts with ADY4. Probable component of a SPB complex composed of ADY3, SSP1, DON1, MPC54, SPO21/MPC70, NUD1 and CNM67.

It localises to the prospore membrane. It is found in the cytoplasm. The protein localises to the cytoskeleton. The protein resides in the spindle pole. In terms of biological role, involved in the pathway that organizes the shaping and sizing of the prospore membrane (PSM) during sporulation. May provide a meiosis-specific scaffold for the assembly of other proteins on spindle pole bodies (SPBs), and may be a limiting component for SPB formation. This is Sporulation-specific protein 21 (SPO21) from Saccharomyces cerevisiae (strain ATCC 204508 / S288c) (Baker's yeast).